The primary structure comprises 241 residues: Carboxy-S-adenosyl-L-methionine synthase (241 aa).

S-adenosyl-L-methionine is bound by residues Y38, 63–65 (GCS), 88–89 (DN), 116–117 (DI), N131, and R198.

This sequence belongs to the class I-like SAM-binding methyltransferase superfamily. Cx-SAM synthase family. As to quaternary structure, homodimer.

The catalysed reaction is prephenate + S-adenosyl-L-methionine = carboxy-S-adenosyl-L-methionine + 3-phenylpyruvate + H2O. Functionally, catalyzes the conversion of S-adenosyl-L-methionine (SAM) to carboxy-S-adenosyl-L-methionine (Cx-SAM). This Actinobacillus pleuropneumoniae serotype 5b (strain L20) protein is Carboxy-S-adenosyl-L-methionine synthase.